Consider the following 87-residue polypeptide: Large ribosomal subunit protein eL20 (87 aa).

It belongs to the eukaryotic ribosomal protein eL20 family. In terms of assembly, part of the 50S ribosomal subunit. Binds 23S rRNA.

The sequence is that of Large ribosomal subunit protein eL20 from Staphylothermus marinus (strain ATCC 43588 / DSM 3639 / JCM 9404 / F1).